The chain runs to 360 residues: Aminomethyltransferase (360 aa).

The protein belongs to the GcvT family. In terms of assembly, the glycine cleavage system is composed of four proteins: P, T, L and H.

It carries out the reaction N(6)-[(R)-S(8)-aminomethyldihydrolipoyl]-L-lysyl-[protein] + (6S)-5,6,7,8-tetrahydrofolate = N(6)-[(R)-dihydrolipoyl]-L-lysyl-[protein] + (6R)-5,10-methylene-5,6,7,8-tetrahydrofolate + NH4(+). The glycine cleavage system catalyzes the degradation of glycine. The protein is Aminomethyltransferase of Pseudoalteromonas translucida (strain TAC 125).